The following is a 420-amino-acid chain: Phosphoribosylamine--glycine ligase (420 aa).

Positions 108-314 (KQFMEKYAIP…FAALIDALLH (207 aa)) constitute an ATP-grasp domain. 134 to 195 (LNERGVPIVI…EDFLAGEEFS (62 aa)) is an ATP binding site. Glu-284 and Asn-286 together coordinate Mg(2+).

This sequence belongs to the GARS family. Mg(2+) is required as a cofactor. It depends on Mn(2+) as a cofactor.

It catalyses the reaction 5-phospho-beta-D-ribosylamine + glycine + ATP = N(1)-(5-phospho-beta-D-ribosyl)glycinamide + ADP + phosphate + H(+). Its pathway is purine metabolism; IMP biosynthesis via de novo pathway; N(1)-(5-phospho-D-ribosyl)glycinamide from 5-phospho-alpha-D-ribose 1-diphosphate: step 2/2. The protein is Phosphoribosylamine--glycine ligase of Listeria monocytogenes serovar 1/2a (strain ATCC BAA-679 / EGD-e).